A 428-amino-acid polypeptide reads, in one-letter code: 3-phosphoshikimate 1-carboxyvinyltransferase (428 aa).

Lysine 22, serine 23, and arginine 27 together coordinate 3-phosphoshikimate. Position 22 (lysine 22) interacts with phosphoenolpyruvate. The phosphoenolpyruvate site is built by glycine 96 and arginine 124. 3-phosphoshikimate contacts are provided by serine 170, serine 171, glutamine 172, serine 198, aspartate 314, asparagine 337, and lysine 341. Glutamine 172 lines the phosphoenolpyruvate pocket. The active-site Proton acceptor is aspartate 314. Residues arginine 345, arginine 387, and lysine 412 each contribute to the phosphoenolpyruvate site.

Belongs to the EPSP synthase family. Monomer.

Its subcellular location is the cytoplasm. It catalyses the reaction 3-phosphoshikimate + phosphoenolpyruvate = 5-O-(1-carboxyvinyl)-3-phosphoshikimate + phosphate. The protein operates within metabolic intermediate biosynthesis; chorismate biosynthesis; chorismate from D-erythrose 4-phosphate and phosphoenolpyruvate: step 6/7. Its function is as follows. Catalyzes the transfer of the enolpyruvyl moiety of phosphoenolpyruvate (PEP) to the 5-hydroxyl of shikimate-3-phosphate (S3P) to produce enolpyruvyl shikimate-3-phosphate and inorganic phosphate. The protein is 3-phosphoshikimate 1-carboxyvinyltransferase of Photobacterium profundum (strain SS9).